A 377-amino-acid polypeptide reads, in one-letter code: Succinyl-diaminopimelate desuccinylase (377 aa).

Residue histidine 66 coordinates Zn(2+). Aspartate 68 is a catalytic residue. Position 99 (aspartate 99) interacts with Zn(2+). The active-site Proton acceptor is the glutamate 133. 3 residues coordinate Zn(2+): glutamate 134, glutamate 162, and histidine 348.

It belongs to the peptidase M20A family. DapE subfamily. Homodimer. Zn(2+) serves as cofactor. Requires Co(2+) as cofactor.

It carries out the reaction N-succinyl-(2S,6S)-2,6-diaminopimelate + H2O = (2S,6S)-2,6-diaminopimelate + succinate. It participates in amino-acid biosynthesis; L-lysine biosynthesis via DAP pathway; LL-2,6-diaminopimelate from (S)-tetrahydrodipicolinate (succinylase route): step 3/3. In terms of biological role, catalyzes the hydrolysis of N-succinyl-L,L-diaminopimelic acid (SDAP), forming succinate and LL-2,6-diaminopimelate (DAP), an intermediate involved in the bacterial biosynthesis of lysine and meso-diaminopimelic acid, an essential component of bacterial cell walls. This Xylella fastidiosa (strain 9a5c) protein is Succinyl-diaminopimelate desuccinylase.